A 373-amino-acid polypeptide reads, in one-letter code: Cobalt-precorrin-5B C(1)-methyltransferase (373 aa).

This sequence belongs to the CbiD family.

It carries out the reaction Co-precorrin-5B + S-adenosyl-L-methionine = Co-precorrin-6A + S-adenosyl-L-homocysteine. It participates in cofactor biosynthesis; adenosylcobalamin biosynthesis; cob(II)yrinate a,c-diamide from sirohydrochlorin (anaerobic route): step 6/10. Catalyzes the methylation of C-1 in cobalt-precorrin-5B to form cobalt-precorrin-6A. The polypeptide is Cobalt-precorrin-5B C(1)-methyltransferase (Listeria monocytogenes serotype 4a (strain HCC23)).